Here is a 263-residue protein sequence, read N- to C-terminus: Malonyl-[acyl-carrier protein] O-methyltransferase (263 aa).

This sequence belongs to the methyltransferase superfamily.

It carries out the reaction malonyl-[ACP] + S-adenosyl-L-methionine = malonyl-[ACP] methyl ester + S-adenosyl-L-homocysteine. Its pathway is cofactor biosynthesis; biotin biosynthesis. Its function is as follows. Converts the free carboxyl group of a malonyl-thioester to its methyl ester by transfer of a methyl group from S-adenosyl-L-methionine (SAM). It allows to synthesize pimeloyl-ACP via the fatty acid synthetic pathway. The sequence is that of Malonyl-[acyl-carrier protein] O-methyltransferase from Chlorobium luteolum (strain DSM 273 / BCRC 81028 / 2530) (Pelodictyon luteolum).